A 2173-amino-acid chain; its full sequence is MAAFGVLSYEHRPLKRPRLGPPDVYPQDPKQKEDELTALNVKQGFNNQPAVSGDEHGSAKNVNFNSSKISSNFSSIIAEKLRCNTFPDTGKRKPQVNQKDNFWLVTARSQSSINNWFTDLAGTKPLTQLAKKVPIFSKKEEVFGYLAKYSVPVMRSAWMIKMTCAYHAAITENKMKKRHVIDPCIEWTPIITKYLWEQLQKVAEFYRQSPSQGCGSPLPAPPAEVETAMKQWEYNEKLAMFMFQDGMLDRHEFLTWVLECFEKIRPGEDELLRLLLPLLLQYSGEFVQSAYLSRRLAYFCTRRLNLLLSDGSIGPGPGGHQAHGISAQQGNALPPTPTSQPAGGNQPQTPFTDFYICPQHRPVVFGLSCMLQSIVLCCPSALVWHYSLTDSRNKTGSPLDLLPIAPSNLPMPGGNSTFNQQVRAKVREIEEQIKERGQAVEFRWSFDKCQETTAGFTISRVLHTLEVLDNHSFEKSDFSNSLDSLYNRIFGSGQSKDGHEMSPDDDAVVTLLCEWAVSCKRSGPHRAMVVAKLLEKRQTEIEAERCGESEVVDEKGSVSSGSLSAATLPVFQDVLLQFLDTQAPVLTEPGNESERVEFSNLVLLFYELIRHDVFSHNIYMCTLISRGDLASNSHLPRPRSPSDEPSDESERKDQDAGSSVKMEDTGMSESMEIDHNSSANFDEMFSPPMHCESKGSPSPEKQAQEQESKSTAKDKGMDPAFPLVYEQPRHIQYATHFPIPQEESASHECNQRLVVLYGVGKQRDEARHAIKKITKDILKVLNRKSTAETGGEEGQKRKRSKPEAFPTAEDIFSKFQHLSHFDQHQVTSQVSRNVLEQITSFALGMSYHLPLVQHIQFIFDLMEYSLNISGLIDFAIQLLNELSLVEAELLLKSSNLAGSYTTGLCLCIVAVLRRYHSCLILNPDQTAQVFDGLRIVVKSGVNPADCSSAERCILAYLYDLYTSCSHLKSKFGEIFSEFCSKVKNSIYYNIDPSDSNMLWDQMFMIDAITNPTAHNLNHSMLGKITNELNDSPANRYSFVCNVLMDVCVDHRDPERVNDIGILCAELTAYCRSLSAEWLGVLKALCCSSNNGNCGFNDLLCNVDVSDLSFHDSLATFVAILIARQCLLLEDLVRCVAIPSLLNAACSEQDSEPGARLTCRILLHLFRTPQRNPCPQDGTKSDKSIVGIRSSCDRHLLAASQNSIVVGAVFAVLKAVFMLGDAELKGSGFSHPAGLDDIGEDDMGSKKSGGRNVSIETASLVVYAKYVLKSICHQEWVGERCLKSLSEDSSALQDPVLVNIQAQRLLQLICYPHRQLDSEEGDNPQRQRIKRILQNMDQWTMRQSSLELQLMIKQSSNNELYSLLENIAKATIEVFQKSAEMNSSNPSWNGSAVSGSSVSNSNSASKLKPVLSSSERSGVWLVAPLIGKLPTSVQGHVLKAAGEELEKGQHLGPSSRKERDRQKQKSMSLLSQQPFLSLVLTCLKGQDEQREGLLTSLYSQVQQIVTNWREDQYQDDCKAKQMMHEALKLRLNLVGGMFDTVQRSTQQTTEWAVLLLDIISSGTVDMQSNNELFTTVLDMLSVLINGTLAADMSSISQGSMEENKRAYMNLVKKLRKELGDRQSESLEKVRQLLPLPKQTRDVITCEPQGSLIDTKGNKIAGFEKEGLQVSTKQKISPWDVFEGLKHSAPLSWGWFGTIRVDRKVTKFEEQQRLLLYHTHIKPKQRSYYLAPLNLPQEEEEPLTPVPPEPDKKLDTAKVEKSVSNVPTKKKKKKPASTVKQEDYKPHNTVMQYAPGMTPDLPLSMGQTNMSYRMGYQAPMNMYAQNQPLPPGGPGLEPPFRPRVPMNKMPPRPNYTMPNMQTAGMGNLMGMEKQYQMNYKPMPNMAQGQMLRHQLQGHNHLIGQQIRQVTPNPQYSSMQPAQNIPQGYTSYGSHMGMQPHPSQTPGMVPNSYGNQGFQTGHPATNPTMVDSIRQMQQRPGYVHQQAPAAYGHTIQSTQRFPHQSMQQTPMMHGLAQSHLGVQGIHPNMRPNQMMEQQQQQQQQQQQQQQQQQQVHQQQQHIRQGPVFRPQQQQQVQQQVQQQVQQQQVQQQQVQQQVQPQQVQQQQVQQQQQQQVSAAQPPAQALGMQALPPQQPMFQRQGMQQTQQQQQTAALVRQLQQQLSSTQPAQNNSSYY.

8 disordered regions span residues 1-34, 318-345, 630-718, 784-804, 1380-1404, 1443-1467, 1737-1780, and 2020-2068; these read MAAF…QKED, GGHQ…AGGN, ASNS…KGMD, KSTA…KPEA, MNSS…NSAS, ELEK…KSMS, EEEP…VKQE, and QGIH…FRPQ. Basic and acidic residues predominate over residues 702–717; that stretch reads QAQEQESKSTAKDKGM. Positions 1389–1404 are enriched in low complexity; the sequence is GSAVSGSSVSNSNSAS. Composition is skewed to basic and acidic residues over residues 1443 to 1462 and 1747 to 1759; these read ELEK…DRQK and EPDK…KVEK. The segment covering 2034-2057 has biased composition (low complexity); that stretch reads QQQQQQQQQQQQQQQQQQVHQQQQ.

It belongs to the Mediator complex subunit 12 family. In terms of assembly, component of the Mediator complex.

Its subcellular location is the nucleus. In terms of biological role, component of the Mediator complex, a coactivator involved in regulated gene transcription of nearly all RNA polymerase II-dependent genes. Mediator functions as a bridge to convey information from gene-specific regulatory proteins to the basal RNA polymerase II transcription machinery. Mediator is recruited to promoters by direct interactions with regulatory proteins and serves as a scaffold for the assembly of a functional preinitiation complex with RNA polymerase II and the general transcription factors. Required for development of the body axis, brain, ear, kidney, forelimb and neural crest and for pigmentation. Acts as a coactivator for sox9a and/or sox9b promoting the expression of several neuronal determination genes. The protein is Mediator of RNA polymerase II transcription subunit 12 (med12) of Danio rerio (Zebrafish).